Consider the following 339-residue polypeptide: Anthranilate phosphoribosyltransferase (339 aa).

Residues Gly81, 84–85 (GD), Thr89, 91–94 (NIST), 109–117 (KHGNRNLSS), and Thr121 each bind 5-phospho-alpha-D-ribose 1-diphosphate. Gly81 contacts anthranilate. A Mg(2+)-binding site is contributed by Ser93. Asn112 contributes to the anthranilate binding site. Arg167 is an anthranilate binding site. Mg(2+) is bound by residues Asp226 and Glu227.

The protein belongs to the anthranilate phosphoribosyltransferase family. Homodimer. Requires Mg(2+) as cofactor.

It carries out the reaction N-(5-phospho-beta-D-ribosyl)anthranilate + diphosphate = 5-phospho-alpha-D-ribose 1-diphosphate + anthranilate. It functions in the pathway amino-acid biosynthesis; L-tryptophan biosynthesis; L-tryptophan from chorismate: step 2/5. Its function is as follows. Catalyzes the transfer of the phosphoribosyl group of 5-phosphorylribose-1-pyrophosphate (PRPP) to anthranilate to yield N-(5'-phosphoribosyl)-anthranilate (PRA). The protein is Anthranilate phosphoribosyltransferase of Ruegeria pomeroyi (strain ATCC 700808 / DSM 15171 / DSS-3) (Silicibacter pomeroyi).